A 420-amino-acid chain; its full sequence is Phospholipase A1-II 3 (420 aa).

Positions 1–21 (MCCFLLVSVLLATTLTDVASA) are cleaved as a signal peptide. Residue Asn-231 is glycosylated (N-linked (GlcNAc...) asparagine). Ser-240 functions as the Acyl-ester intermediate in the catalytic mechanism. Ser-240 (charge relay system) is an active-site residue. The N-linked (GlcNAc...) asparagine glycan is linked to Asn-294. Catalysis depends on charge relay system residues Asp-305 and His-343. Residues 367-388 (VVDRDLALVNKEVDALRDEYQV) are a coiled coil. N-linked (GlcNAc...) asparagine glycosylation occurs at Asn-403.

It belongs to the AB hydrolase superfamily. Lipase family.

The protein resides in the secreted. Its function is as follows. Acylhydrolase that catalyzes the hydrolysis of phospholipids at the sn-1 position. This is Phospholipase A1-II 3 from Oryza sativa subsp. indica (Rice).